Reading from the N-terminus, the 431-residue chain is 3-isopropylmalate dehydratase large subunit (431 aa).

Residues Cys308, Cys368, and Cys371 each coordinate [4Fe-4S] cluster.

This sequence belongs to the aconitase/IPM isomerase family. LeuC type 2 subfamily. Heterodimer of LeuC and LeuD. Requires [4Fe-4S] cluster as cofactor.

The enzyme catalyses (2R,3S)-3-isopropylmalate = (2S)-2-isopropylmalate. The protein operates within amino-acid biosynthesis; L-leucine biosynthesis; L-leucine from 3-methyl-2-oxobutanoate: step 2/4. Its function is as follows. Catalyzes the isomerization between 2-isopropylmalate and 3-isopropylmalate, via the formation of 2-isopropylmaleate. This Desulfosudis oleivorans (strain DSM 6200 / JCM 39069 / Hxd3) (Desulfococcus oleovorans) protein is 3-isopropylmalate dehydratase large subunit.